Consider the following 326-residue polypeptide: Aldo-keto reductase family 1 member D1 (326 aa).

NADP(+)-binding positions include 22 to 26 (GLGTY) and Asp53. Tyr26 contacts substrate. Substrate-binding residues include Tyr58, Trp89, Glu120, and Tyr132. Tyr58 acts as the Proton donor in catalysis. NADP(+)-binding positions include 169–170 (SN), Gln193, and 219–224 (YSPLGT). Substrate is bound at residue Trp230. NADP(+) is bound at residue 273 to 283 (KSFNPERIKEN).

It belongs to the aldo/keto reductase family.

The protein localises to the cytoplasm. The enzyme catalyses 5beta-cholestan-3-one + NADP(+) = cholest-4-en-3-one + NADPH + H(+). The catalysed reaction is 4,5beta-dihydrocortisone + NADP(+) = cortisone + NADPH + H(+). It catalyses the reaction cortisol + NADPH + H(+) = 5beta-dihydrocortisol + NADP(+). It carries out the reaction corticosterone + NADPH + H(+) = 5beta-dihydrocorticosterone + NADP(+). The enzyme catalyses 7alpha,12alpha-dihydroxycholest-4-en-3-one + NADPH + H(+) = 7alpha,12alpha-dihydroxy-5beta-cholestan-3-one + NADP(+). The catalysed reaction is 7alpha-hydroxycholest-4-en-3-one + NADPH + H(+) = 7alpha-hydroxy-5beta-cholestan-3-one + NADP(+). It catalyses the reaction epitestosterone + NADPH + H(+) = 5beta-dihydroepitestosterone + NADP(+). It carries out the reaction androst-4-ene-3,17-dione + NADPH + H(+) = 5beta-androstane-3,17-dione + NADP(+). The enzyme catalyses progesterone + NADPH + H(+) = 5beta-pregnan-3,20-dione + NADP(+). The catalysed reaction is 21-hydroxyprogesterone + NADPH + H(+) = 5beta-dihydrodeoxycorticosterone + NADP(+). It catalyses the reaction aldosterone + NADPH + H(+) = 5beta-dihydroaldosterone + NADP(+). It carries out the reaction 17beta-hydroxyandrosta-1,4-dien-3-one + NADPH + H(+) = 17beta-hydroxy-5beta-androst-1-en-3-one + NADP(+). The enzyme catalyses 17beta-hydroxyestr-4-en-3-one + NADPH + H(+) = 17beta-hydroxy-5beta-estran-3-one + NADP(+). The catalysed reaction is 5beta-dihydrotestosterone + NADP(+) = testosterone + NADPH + H(+). It catalyses the reaction androst-4-ene-3,11,17-trione + NADPH + H(+) = 17beta-hydroxyandrost-4-ene-3,11-dione + NADP(+). Subject to inhibition by high substrate concentrations. Inhibited by testosterone concentrations above 10 uM. Inhibited by the primary and secondary bile acids chenodeoxycholic acid and ursodeoxycholic acid. Functionally, catalyzes the stereospecific NADPH-dependent reduction of the C4-C5 double bond of bile acid intermediates and steroid hormones carrying a delta(4)-3-one structure to yield an A/B cis-ring junction. This cis-configuration is crucial for bile acid biosynthesis and plays important roles in steroid metabolism. Capable of reducing a broad range of delta-(4)-3-ketosteroids from C18 (such as, 17beta-hydroxyestr-4-en-3-one) to C27 (such as, 7alpha-hydroxycholest-4-en-3-one). The polypeptide is Aldo-keto reductase family 1 member D1 (AKR1D1) (Oryctolagus cuniculus (Rabbit)).